We begin with the raw amino-acid sequence, 123 residues long: Putative iron-sulfur cluster insertion protein ErpA (123 aa).

Positions 51, 115, and 117 each coordinate iron-sulfur cluster.

It belongs to the HesB/IscA family. As to quaternary structure, homodimer. Requires iron-sulfur cluster as cofactor.

Its function is as follows. Required for insertion of 4Fe-4S clusters. The chain is Putative iron-sulfur cluster insertion protein ErpA from Bordetella bronchiseptica (strain ATCC BAA-588 / NCTC 13252 / RB50) (Alcaligenes bronchisepticus).